A 210-amino-acid polypeptide reads, in one-letter code: Endonuclease III (210 aa).

Residues phenylalanine 108–asparagine 127 form the HhH domain. [4Fe-4S] cluster-binding residues include cysteine 187, cysteine 194, cysteine 197, and cysteine 203.

Belongs to the Nth/MutY family. It depends on [4Fe-4S] cluster as a cofactor.

The catalysed reaction is 2'-deoxyribonucleotide-(2'-deoxyribose 5'-phosphate)-2'-deoxyribonucleotide-DNA = a 3'-end 2'-deoxyribonucleotide-(2,3-dehydro-2,3-deoxyribose 5'-phosphate)-DNA + a 5'-end 5'-phospho-2'-deoxyribonucleoside-DNA + H(+). Functionally, DNA repair enzyme that has both DNA N-glycosylase activity and AP-lyase activity. The DNA N-glycosylase activity releases various damaged pyrimidines from DNA by cleaving the N-glycosidic bond, leaving an AP (apurinic/apyrimidinic) site. The AP-lyase activity cleaves the phosphodiester bond 3' to the AP site by a beta-elimination, leaving a 3'-terminal unsaturated sugar and a product with a terminal 5'-phosphate. This Rickettsia conorii (strain ATCC VR-613 / Malish 7) protein is Endonuclease III.